A 126-amino-acid chain; its full sequence is Glycine cleavage system H protein (126 aa).

Residues 22 to 104 (VATIGITEYA…YEKAWMVKVE (83 aa)) form the Lipoyl-binding domain. At K63 the chain carries N6-lipoyllysine.

The protein belongs to the GcvH family. In terms of assembly, the glycine cleavage system is composed of four proteins: P, T, L and H. It depends on (R)-lipoate as a cofactor.

In terms of biological role, the glycine cleavage system catalyzes the degradation of glycine. The H protein shuttles the methylamine group of glycine from the P protein to the T protein. Functionally, is also involved in protein lipoylation via its role as an octanoyl/lipoyl carrier protein intermediate. The protein is Glycine cleavage system H protein of Staphylococcus aureus (strain JH1).